Reading from the N-terminus, the 333-residue chain is E3 ubiquitin-protein ligase MIR1 (333 aa).

The segment at 1 to 60 adopts an RING-CH-type zinc-finger fold; it reads MEDEDVPVCWICNEELGNERFRACGCTGELENVHRSCLSTWLTISRNTACQICGVVYNTR. Residues 1–82 lie on the Cytoplasmic side of the membrane; sequence MEDEDVPVCW…PRLTYQEGLE (82 aa). Zn(2+) contacts are provided by cysteine 9, cysteine 12, cysteine 24, cysteine 26, histidine 34, cysteine 37, cysteine 50, and cysteine 53. A helical transmembrane segment spans residues 83 to 103; that stretch reads LIVFIFIMTLGAAGLAAATWV. The Extracellular segment spans residues 104–121; sequence WLYIVGGHDPEIDHVAAA. Residues 122-142 traverse the membrane as a helical segment; it reads AYYVFFVFYQLFVVFGLGAFF. Residues 143 to 333 are Cytoplasmic-facing; that stretch reads HMMRHVGRAY…SAVSSALMFH (191 aa). The tract at residues 187-257 is disordered; it reads GDNQDEEGPA…GRDDNVEPTA (71 aa). Residues 195-221 show a composition bias toward low complexity; that stretch reads PAGAAPGDQNGPAGAAPGDQDGPADGA. The span at 235–252 shows a compositional bias: basic and acidic residues; sequence AGYKEAGEPTHNDGRDDN.

As to quaternary structure, binds human MHC-I and CD1D.

It localises to the host cell membrane. The protein localises to the host endoplasmic reticulum. The enzyme catalyses [E2 ubiquitin-conjugating enzyme]-S-ubiquitinyl-L-cysteine + [acceptor protein]-L-cysteine = [E2 ubiquitin-conjugating enzyme]-L-cysteine + [acceptor protein]-S-ubiquitinyl-L-cysteine.. Its pathway is protein modification; protein ubiquitination. Membrane-bound E3 ubiquitin ligase expressed during late stages of lytic replication to mediate polyubiquitination of various host membrane proteins related to the immune response. Promotes ubiquitination and subsequent degradation of host MHC-I and CD1D molecules, DC-SIGN and DC-SIGNR, presumably to prevent lysis of infected cells by cytotoxic T-lymphocytes. Binds target molecules through transmembrane interaction. E3 ubiquitin-protein ligases accept ubiquitin from specific E2 ubiquitin-conjugating enzymes, and then transfer it to target protein. The result of this ubiquitination is the enhancement of the endocytosis of the target chain and the delivery to the lysosome, where it is proteolytically destroyed. Induces ubiquitination not only on lysines, but also on cysteine residues. In Human herpesvirus 8 type P (isolate GK18) (HHV-8), this protein is E3 ubiquitin-protein ligase MIR1 (K3).